Reading from the N-terminus, the 185-residue chain is Large ribosomal subunit protein uL22 (185 aa).

The segment at 160 to 185 (VSHDDSQKKKVSKKKLARQKEKMMRE) is disordered.

Belongs to the universal ribosomal protein uL22 family.

In Maconellicoccus hirsutus (Pink hibiscus mealybug), this protein is Large ribosomal subunit protein uL22 (RpL17).